Consider the following 659-residue polypeptide: DNA helicase/primase complex-associated protein (659 aa).

This sequence belongs to the herpesviridae HEPA family. As to quaternary structure, associates with the primase and the helicase to form the helicase-primase complex. Interacts with the origin-binding protein. Interacts with the polymerase catalytic subunit.

It is found in the host nucleus. Component of the helicase/primase complex. Unwinds the DNA at the replication forks and generates single-stranded DNA for both leading and lagging strand synthesis. The primase synthesizes short RNA primers on the lagging strand that the polymerase presumably elongates using dNTPs. The primase-associated factor has no known catalytic activity in the complex and may serve to facilitate the formation of the replisome by directly interacting with the origin-binding protein and the polymerase. The chain is DNA helicase/primase complex-associated protein (U74) from Human herpesvirus 7 (strain JI) (HHV-7).